The chain runs to 229 residues: Growth factor receptor-bound protein 2-A (229 aa).

An SH3 1 domain is found at 1–58 (MEAIAKYDFKATADDELSFKRGDVLKVLNEECDQNWYKAELNGKDGFIPKNYIEMKAH). The 93-residue stretch at 60 to 152 (WFFGKIPRAK…NQQIFLRDIE (93 aa)) folds into the SH2 domain. In terms of domain architecture, SH3 2 spans 168-227 (QQPTYVQALFDFDPQEDGELGFRRGDFIQVVDNSDPNWWKGTCLSQTGMFPRNYVTPVNR).

It belongs to the GRB2/sem-5/DRK family.

The protein localises to the nucleus. The protein resides in the cytoplasm. It is found in the endosome. Its subcellular location is the golgi apparatus. Adapter protein that provides a critical link between cell surface growth factor receptors and the Ras signaling pathway. Promotes meiotic reinitiation during oocyte maturation. This Xenopus laevis (African clawed frog) protein is Growth factor receptor-bound protein 2-A (grb2-a).